The sequence spans 264 residues: Type II iodothyronine deiodinase (264 aa).

Over 1 to 7 the chain is Lumenal; sequence MGLLSVD. Residues 8–28 form a helical; Signal-anchor for type III membrane protein membrane-spanning segment; that stretch reads LLITLQILPGFFSNCLFLALY. The Cytoplasmic portion of the chain corresponds to 29–264; sequence DSVVLVKHVL…AESGQTGTEK (236 aa). The active site involves selenocysteine 124. Residue selenocysteine 124 is a non-standard amino acid, selenocysteine.

Belongs to the iodothyronine deiodinase family. Predominantly monomer. Can form homodimers but homodimerization is not essential for enzyme activity. As to expression, high levels seen in the metamorphosing tail.

Its subcellular location is the endoplasmic reticulum membrane. It carries out the reaction 3,3',5-triiodo-L-thyronine + iodide + A + H(+) = L-thyroxine + AH2. It catalyses the reaction 3,3'-diiodo-L-thyronine + iodide + A + H(+) = 3,3',5'-triiodo-L-thyronine + AH2. The enzyme catalyses 3'-iodo-L-thyronine + iodide + A + H(+) = 3',5'-diiodo-L-thyronine + AH2. The catalysed reaction is 3,3'-diiodothyronamine + iodide + A + H(+) = 3,3',5'-triiodothyronamine + AH2. It carries out the reaction 3'-iodothyronamine + iodide + A + H(+) = 3',5'-diiodothyronamine + AH2. Its activity is regulated as follows. Not inhibited by N(6)-propylthiouracil. Plays a crucial role in the metabolism of thyroid hormones (TH) and has specific roles in TH activation and inactivation by deiodination. Catalyzes the deiodination of L-thyroxine (T4) to 3,5,3'-triiodothyronine (T3) and 3',5'-diiodothyronine (3',5'-T2) to 3'-monoiodothyronine (3'-T1) via outer-ring deiodination (ORD). Catalyzes the deiodination of 3,3',5'-triiodothyronine (rT3) to 3,3'-diiodothyronine (3,3'-T2) via ORD. Catalyzes the phenolic ring deiodinations of 3,3',5'-triiodothyronamine and 3',5'- diiodothyronamine. The chain is Type II iodothyronine deiodinase (dio2) from Aquarana catesbeiana (American bullfrog).